Here is a 572-residue protein sequence, read N- to C-terminus: MTLKITRRAYAEMFGPTTGDRVRLADTDLIVEVERDYTIYGEEVKFGGGKVIRDGMGQSQRESKDCADTVITNALIIDHWGIVKADIGLKHGRIAAIGKAGNPDIQPGVTIVIGPGTEIIAGEGMIVTAGGVDTHIHFICPQQIDEALNSGVTTMIGGGTGPATGTYATTCTPGPWHLQRMLQAADAYPMNIGFLGKGNGSLPGALREQIDAGAIGLKLHEDWGSTPAAIDCCLGVADDTDTQVAIHTDTLNESGFVEATIAAFKGRTIHTYHTEGAGGGHAPDIIRVCGESNVLPSSTNPTRPFTVNTLDEHLDMLMVCHHLDASIAEDIAFAESRIRRETIAAEDILHDLGAFSMLSSDSQAMGRVGEVILRTWQTAHKMKAQRGKLAGDPNDARGGHDNFRVKRYVAKYTINPAITHGIAHEVGSIEVGKWADLVLWKPAFFGVKPSLILKGGMIASAAMGDANASIPTPQPVHYRPMFAAAGGALARSSLSFLSQSAAQAGVAERYGLAKTTAVVRGTRAVTKAQMIHNDWQPSITVDPETYQVVADGMLLTCEPAEVLPMAQRYFLF.

The Urease domain maps to 130–572; it reads GGVDTHIHFI…LPMAQRYFLF (443 aa). Ni(2+)-binding residues include H135, H137, and K218. K218 is modified (N6-carboxylysine). A substrate-binding site is contributed by H220. H247 and H273 together coordinate Ni(2+). H321 (proton donor) is an active-site residue. Position 361 (D361) interacts with Ni(2+).

This sequence belongs to the metallo-dependent hydrolases superfamily. Urease alpha subunit family. In terms of assembly, heterotrimer of UreA (gamma), UreB (beta) and UreC (alpha) subunits. Three heterotrimers associate to form the active enzyme. Requires Ni cation as cofactor. Post-translationally, carboxylation allows a single lysine to coordinate two nickel ions.

The protein localises to the cytoplasm. The catalysed reaction is urea + 2 H2O + H(+) = hydrogencarbonate + 2 NH4(+). It functions in the pathway nitrogen metabolism; urea degradation; CO(2) and NH(3) from urea (urease route): step 1/1. This chain is Urease subunit alpha, found in Ralstonia nicotianae (strain ATCC BAA-1114 / GMI1000) (Ralstonia solanacearum).